We begin with the raw amino-acid sequence, 267 residues long: Membrane-associated protein Vipp1 (267 aa).

A coiled-coil region spans residues 26–156 (EKVLEQAVID…KANAELQQTL (131 aa)). Residues 224–252 (GTSAATPQLEAAPVDSSVPANNASQDDAV) are disordered.

This sequence belongs to the PspA/Vipp/IM30 family.

The protein resides in the cell inner membrane. Its function is as follows. Required for thylakoid formation. The sequence is that of Membrane-associated protein Vipp1 from Synechocystis sp. (strain ATCC 27184 / PCC 6803 / Kazusa).